A 92-amino-acid polypeptide reads, in one-letter code: Small ribosomal subunit protein bS20 (92 aa).

Belongs to the bacterial ribosomal protein bS20 family.

In terms of biological role, binds directly to 16S ribosomal RNA. The polypeptide is Small ribosomal subunit protein bS20 (Persephonella marina (strain DSM 14350 / EX-H1)).